A 223-amino-acid polypeptide reads, in one-letter code: Urease accessory protein UreF (223 aa).

The protein belongs to the UreF family. In terms of assembly, ureD, UreF and UreG form a complex that acts as a GTP-hydrolysis-dependent molecular chaperone, activating the urease apoprotein by helping to assemble the nickel containing metallocenter of UreC. The UreE protein probably delivers the nickel.

It localises to the cytoplasm. Required for maturation of urease via the functional incorporation of the urease nickel metallocenter. In Rhizobium johnstonii (strain DSM 114642 / LMG 32736 / 3841) (Rhizobium leguminosarum bv. viciae), this protein is Urease accessory protein UreF.